The sequence spans 2051 residues: Autophagy-related protein 2 (2051 aa).

The Chorein N-terminal domain maps to 31-121 (QALDLDNLNF…QDEQTAKNKK (91 aa)). The segment covering 108-117 (SKQEQDEQTA) has biased composition (basic and acidic residues). Disordered regions lie at residues 108-129 (SKQE…DGDE), 152-179 (RRLE…DDDG), 297-331 (SLVK…DMSI), 363-384 (DTQY…TPRA), 419-466 (RSEP…ADTE), and 501-564 (PGGW…DTST). 2 stretches are compositionally biased toward polar residues: residues 374 to 383 (AGSSPLSTPR) and 426 to 435 (PPTSFQPQTM). Positions 436–454 (PSGAVSPAPSEPSSSASSV) are enriched in low complexity.

The protein belongs to the ATG2 family.

The protein resides in the preautophagosomal structure membrane. The protein localises to the endoplasmic reticulum membrane. The catalysed reaction is a 1,2-diacyl-sn-glycero-3-phosphocholine(in) = a 1,2-diacyl-sn-glycero-3-phosphocholine(out). It catalyses the reaction a 1,2-diacyl-sn-glycero-3-phospho-L-serine(in) = a 1,2-diacyl-sn-glycero-3-phospho-L-serine(out). It carries out the reaction a 1,2-diacyl-sn-glycero-3-phosphoethanolamine(in) = a 1,2-diacyl-sn-glycero-3-phosphoethanolamine(out). Functionally, lipid transfer protein required for autophagosome completion and peroxisome degradation. Tethers the edge of the isolation membrane (IM) to the endoplasmic reticulum (ER) and mediates direct lipid transfer from ER to IM for IM expansion. Atg-2 binds to the ER exit site (ERES), which is the membrane source for autophagosome formation, using basic residues in its N-terminal region (NR) and to the expanding edge of the IM through its C-terminal region. The latter binding is assisted by an atg-18-PtdIns3P interaction. Atg-2 then extracts phospholipids from the membrane source using its NR and transfers them to atg-9 to the IM through its predicted beta-sheet-rich structure for membrane expansion. The sequence is that of Autophagy-related protein 2 (apg-2) from Neurospora crassa (strain ATCC 24698 / 74-OR23-1A / CBS 708.71 / DSM 1257 / FGSC 987).